We begin with the raw amino-acid sequence, 209 residues long: High-affinity nitrate transporter 3.2 (209 aa).

Residues 1 to 22 (MAIHTLLFVSLLIFSLIESSSG) form the signal peptide. A helical membrane pass occupies residues 177-197 (LDIASTFFSVFSVVSLFVFFV).

It belongs to the NAR2 family. Bearly detected in roots and shoots.

The protein resides in the cell membrane. Its function is as follows. Acts as a dual component transporter with NTR2.1. Required for high-affinity nitrate transport. This is High-affinity nitrate transporter 3.2 from Arabidopsis thaliana (Mouse-ear cress).